Consider the following 648-residue polypeptide: Cell surface glycoprotein MUC18 (648 aa).

A signal peptide spans 1 to 23; it reads MGLPKLVCVFLFAACCCCRRAAG. 2 Ig-like V-type domains span residues 24-131 and 141-244; these read VPGE…HYVE and PTIQ…KEVT. At 24-563 the chain is on the extracellular side; that stretch reads VPGEEKQPVP…LPQPESKGVV (540 aa). Cystine bridges form between Cys-50-Cys-118, Cys-163-Cys-225, Cys-274-Cys-322, Cys-367-Cys-409, and Cys-454-Cys-501. An N-linked (GlcNAc...) asparagine glycan is attached at Asn-58. Ig-like C2-type domains are found at residues 246-332, 337-426, and 432-512; these read PVFY…TTIT, PLEL…QLVS, and SPWM…SNTT. Residues 281-304 form a disordered region; the sequence is QPHFTINKKDPSTGEMEEESTDEN. N-linked (GlcNAc...) asparagine glycosylation is present at Asn-510. Polar residues predominate over residues 532–549; it reads TGLSTLTVSPHTRANSTS. Residues 532 to 554 form a disordered region; the sequence is TGLSTLTVSPHTRANSTSTEKKL. The chain crosses the membrane as a helical span at residues 564-584; the sequence is IVAVIVCTLVLAVLGAALYFF. The Cytoplasmic segment spans residues 585 to 648; it reads YKKGKLPCGR…QGEKYIDLRH (64 aa). Phosphoserine is present on residues Ser-608 and Ser-616. Residues 625 to 648 are disordered; sequence LLQGSNGDKRAPGDQGEKYIDLRH. Positions 631-648 are enriched in basic and acidic residues; the sequence is GDKRAPGDQGEKYIDLRH.

In terms of tissue distribution, detected in melanoma cell lines.

The protein localises to the membrane. Plays a role in cell adhesion, and in cohesion of the endothelial monolayer at intercellular junctions in vascular tissue. Its expression may allow melanoma cells to interact with cellular elements of the vascular system, thereby enhancing hematogeneous tumor spread. Could be an adhesion molecule active in neural crest cells during embryonic development. Acts as a surface receptor that triggers tyrosine phosphorylation of FYN and PTK2/FAK1, and a transient increase in the intracellular calcium concentration. In Mus musculus (Mouse), this protein is Cell surface glycoprotein MUC18 (Mcam).